Consider the following 332-residue polypeptide: Fructose-1,6-bisphosphatase class 1 (332 aa).

Residues glutamate 89, aspartate 110, leucine 112, and aspartate 113 each coordinate Mg(2+). Residues 113-116 (DGSS), asparagine 206, tyrosine 239, 257-259 (YLY), and lysine 269 contribute to the substrate site. Glutamate 275 is a Mg(2+) binding site.

The protein belongs to the FBPase class 1 family. In terms of assembly, homotetramer. The cofactor is Mg(2+).

It localises to the cytoplasm. The enzyme catalyses beta-D-fructose 1,6-bisphosphate + H2O = beta-D-fructose 6-phosphate + phosphate. It participates in carbohydrate biosynthesis; gluconeogenesis. This chain is Fructose-1,6-bisphosphatase class 1, found in Citrobacter koseri (strain ATCC BAA-895 / CDC 4225-83 / SGSC4696).